Here is a 297-residue protein sequence, read N- to C-terminus: Acetyl-coenzyme A carboxylase carboxyl transferase subunit beta (297 aa).

The 270-residue stretch at 25 to 294 (LWVKCPETGQ…LPPKGRLPRP (270 aa)) folds into the CoA carboxyltransferase N-terminal domain.

It belongs to the AccD/PCCB family. Acetyl-CoA carboxylase is a heterohexamer composed of biotin carboxyl carrier protein (AccB), biotin carboxylase (AccC) and two subunits each of ACCase subunit alpha (AccA) and ACCase subunit beta (AccD).

The protein localises to the cytoplasm. It carries out the reaction N(6)-carboxybiotinyl-L-lysyl-[protein] + acetyl-CoA = N(6)-biotinyl-L-lysyl-[protein] + malonyl-CoA. The protein operates within lipid metabolism; malonyl-CoA biosynthesis; malonyl-CoA from acetyl-CoA: step 1/1. Its function is as follows. Component of the acetyl coenzyme A carboxylase (ACC) complex. Biotin carboxylase (BC) catalyzes the carboxylation of biotin on its carrier protein (BCCP) and then the CO(2) group is transferred by the transcarboxylase to acetyl-CoA to form malonyl-CoA. The chain is Acetyl-coenzyme A carboxylase carboxyl transferase subunit beta from Xanthobacter autotrophicus (strain ATCC BAA-1158 / Py2).